The following is a 579-amino-acid chain: uncharacterized protein (579 aa).

In terms of domain architecture, GGDEF spans 449–577; it reads QKGVFILVDI…GKNRLMIHDS (129 aa).

This is an uncharacterized protein from Bacillus subtilis (strain 168).